The sequence spans 554 residues: CTP synthase (554 aa).

The amidoligase domain stretch occupies residues 1 to 265 (MTPLIFVTGG…DEIVIDQFKL (265 aa)). Ser-13 is a binding site for CTP. Position 13 (Ser-13) interacts with UTP. ATP-binding positions include 14–19 (SLGKGI) and Asp-71. The Mg(2+) site is built by Asp-71 and Glu-139. Residues 146–148 (DIE), 186–191 (KTKPTQ), and Lys-222 contribute to the CTP site. Residues 186-191 (KTKPTQ) and Lys-222 each bind UTP. Positions 292–545 (TIAVVGKYVD…VKAARARKAG (254 aa)) constitute a Glutamine amidotransferase type-1 domain. Gly-353 serves as a coordination point for L-glutamine. Cys-380 serves as the catalytic Nucleophile; for glutamine hydrolysis. Residues 381–384 (YGMQ), Glu-404, and Arg-471 contribute to the L-glutamine site. Residues His-518 and Glu-520 contribute to the active site.

This sequence belongs to the CTP synthase family. As to quaternary structure, homotetramer.

The enzyme catalyses UTP + L-glutamine + ATP + H2O = CTP + L-glutamate + ADP + phosphate + 2 H(+). It carries out the reaction L-glutamine + H2O = L-glutamate + NH4(+). It catalyses the reaction UTP + NH4(+) + ATP = CTP + ADP + phosphate + 2 H(+). Its pathway is pyrimidine metabolism; CTP biosynthesis via de novo pathway; CTP from UDP: step 2/2. With respect to regulation, allosterically activated by GTP, when glutamine is the substrate; GTP has no effect on the reaction when ammonia is the substrate. The allosteric effector GTP functions by stabilizing the protein conformation that binds the tetrahedral intermediate(s) formed during glutamine hydrolysis. Inhibited by the product CTP, via allosteric rather than competitive inhibition. In terms of biological role, catalyzes the ATP-dependent amination of UTP to CTP with either L-glutamine or ammonia as the source of nitrogen. Regulates intracellular CTP levels through interactions with the four ribonucleotide triphosphates. The protein is CTP synthase of Xylella fastidiosa (strain 9a5c).